We begin with the raw amino-acid sequence, 181 residues long: Mitochondrial pyruvate carrier-like protein (181 aa).

Helical transmembrane passes span 23–42 and 52–74; these read YLAS…PLAA and IISG…FAYR. A disordered region spans residues 125 to 154; sequence TGSVDSSATSTGSVDSSATSTGSVDSSAAT.

Belongs to the mitochondrial pyruvate carrier (MPC) (TC 2.A.105) family.

The protein localises to the mitochondrion inner membrane. In terms of biological role, may mediate the uptake of pyruvate into mitochondria. The polypeptide is Mitochondrial pyruvate carrier-like protein (Bos taurus (Bovine)).